A 657-amino-acid chain; its full sequence is Probable cytochrome P450 556A1 (657 aa).

A helical transmembrane segment spans residues 2–24 (FLTSILYTIIIILIFYKGLEYLI). Residues 440–486 (RSLPSINNNNNNNNNNNNNNNNNNNNNNNNNSNNNSINGNNKNNNRN) are disordered. Positions 446–486 (NNNNNNNNNNNNNNNNNNNNNNNNNSNNNSINGNNKNNNRN) are enriched in low complexity. Residue Cys-587 coordinates heme.

It belongs to the cytochrome P450 family. Requires heme as cofactor.

The protein localises to the membrane. The polypeptide is Probable cytochrome P450 556A1 (cyp556A1) (Dictyostelium discoideum (Social amoeba)).